The primary structure comprises 395 residues: Guanine nucleotide-binding protein subunit beta-5b (395 aa).

WD repeat units lie at residues 103–142, 145–184, 193–234, 235–276, 279–318, 320–362, and 365–395; these read GHGN…KEHA, MPCT…NENL, MHTN…QSFH, GHSA…NVQS, THDS…EVAI, SKDS…RVAI, and GHEN…RIWA.

This sequence belongs to the WD repeat G protein beta family. May interact with RGS9; this interaction stabilizes both proteins and increases RGS9 GTPase-activating protein (GAP) activity, hence accelerating the deactivation of D(2) dopamine receptor-mediated signaling.

The protein localises to the membrane. Enhances GTPase-activating protein (GAP) activity of regulator of G protein signaling (RGS) proteins, such as RGS7 and RGS9, hence involved in the termination of the signaling initiated by the G protein coupled receptors (GPCRs) by accelerating the GTP hydrolysis on the G-alpha subunits, thereby promoting their inactivation. Increases RGS7 GTPase-activating protein (GAP) activity, thereby regulating mood and cognition. Increases RGS9 GTPase-activating protein (GAP) activity, hence contributes to the deactivation of G protein signaling initiated by D(2) dopamine receptors. Along with gnb5a, plays an important role in neuronal signaling, including in the parasympathetic, but not sympathetic, control of heart rate. The chain is Guanine nucleotide-binding protein subunit beta-5b from Danio rerio (Zebrafish).